Here is a 455-residue protein sequence, read N- to C-terminus: Xylan O-acetyltransferase 3 (455 aa).

Positions 1–15 are enriched in low complexity; sequence MSKPQQQSPPSTTTT. The interval 1 to 32 is disordered; the sequence is MSKPQQQSPPSTTTTSPPPPPPSTPPPASSSR. Topologically, residues 1-42 are cytoplasmic; that stretch reads MSKPQQQSPPSTTTTSPPPPPPSTPPPASSSRSLLSALRRSP. Residues 16 to 28 are compositionally biased toward pro residues; sequence SPPPPPPSTPPPA. The chain crosses the membrane as a helical; Signal-anchor for type II membrane protein span at residues 43–59; sequence VTTLVAAFFLLALFMYG. The Lumenal portion of the chain corresponds to 60–455; sequence EDVRTLAELS…PSTHPSLPPQ (396 aa). Residues asparagine 82, asparagine 107, and asparagine 146 are each glycosylated (N-linked (GlcNAc...) asparagine). 4 disulfide bridges follow: cysteine 96–cysteine 147, cysteine 118–cysteine 183, cysteine 127–cysteine 423, and cysteine 339–cysteine 419. The GDS motif signature appears at 170–172; that stretch reads GDS. Serine 172 acts as the Nucleophile in catalysis. Asparagine 278 and asparagine 348 each carry an N-linked (GlcNAc...) asparagine glycan. The active-site Proton donor is aspartate 418. Positions 418-421 match the DXXH motif motif; the sequence is DCIH. Catalysis depends on histidine 421, which acts as the Proton acceptor.

The protein belongs to the PC-esterase family. TBL subfamily. As to expression, highly expressed in leaves. Expressed in roots, stems and inflorescences.

It is found in the golgi apparatus membrane. In terms of biological role, xylan acetyltransferase required for 2-O- and 3-O-monoacetylation of xylosyl residues in xylan. Catalyzes the 2-O-acetylation of xylan, followed by nonenzymatic acetyl migration to the O-3 position, resulting in products that are monoacetylated at both O-2 and O-3 positions. The sequence is that of Xylan O-acetyltransferase 3 from Oryza sativa subsp. japonica (Rice).